A 503-amino-acid chain; its full sequence is Aromatase (503 aa).

A run of 2 helical transmembrane segments spans residues Glu-19–Trp-39 and Gly-51–Gly-71. The interval Glu-294 to Gln-324 is substrate-binding pocket. The substrate site is built by Asp-309 and Met-374. Cys-437 is a binding site for heme.

This sequence belongs to the cytochrome P450 family. It depends on heme as a cofactor. Expressed in placenta. Highly expressed in follicles (0 hour:hCG), followed by a drop (12-24 hour:hCG) and by an increase (30-39 hour:hCG). Highly expressed in corpora lutea. Also expressed in granulosa cell layer. Not expressed in theca interna.

It localises to the endoplasmic reticulum membrane. The protein resides in the microsome membrane. It catalyses the reaction testosterone + 3 reduced [NADPH--hemoprotein reductase] + 3 O2 = 17beta-estradiol + formate + 3 oxidized [NADPH--hemoprotein reductase] + 4 H2O + 4 H(+). It carries out the reaction androst-4-ene-3,17-dione + 3 reduced [NADPH--hemoprotein reductase] + 3 O2 = estrone + formate + 3 oxidized [NADPH--hemoprotein reductase] + 4 H2O + 4 H(+). The catalysed reaction is androst-4-ene-3,17-dione + reduced [NADPH--hemoprotein reductase] + O2 = 19-hydroxyandrost-4-ene-3,17-dione + oxidized [NADPH--hemoprotein reductase] + H2O + H(+). The enzyme catalyses 19-hydroxyandrost-4-ene-3,17-dione + reduced [NADPH--hemoprotein reductase] + O2 = 19-oxo-androst-4-ene-3,17-dione + oxidized [NADPH--hemoprotein reductase] + 2 H2O + H(+). It catalyses the reaction 19-oxo-androst-4-ene-3,17-dione + reduced [NADPH--hemoprotein reductase] + O2 = estrone + formate + oxidized [NADPH--hemoprotein reductase] + H2O + 2 H(+). It carries out the reaction estrone + reduced [NADPH--hemoprotein reductase] + O2 = 2-hydroxyestrone + oxidized [NADPH--hemoprotein reductase] + H2O + H(+). The catalysed reaction is 17beta-hydroxy-5alpha-androstan-3-one + reduced [NADPH--hemoprotein reductase] + O2 = 17beta,19-dihydroxy-3-oxo-5alpha-androstanone + oxidized [NADPH--hemoprotein reductase] + H2O + H(+). The enzyme catalyses 17beta,19-dihydroxy-3-oxo-5alpha-androstanone + reduced [NADPH--hemoprotein reductase] + O2 = 17beta-hydroxy-3,19-dioxo-5alpha-androstanone + oxidized [NADPH--hemoprotein reductase] + 2 H2O + H(+). It catalyses the reaction 17beta-hydroxy-3,19-dioxo-5alpha-androstanone + reduced [NADPH--hemoprotein reductase] + O2 = 17beta-hydroxy-3-oxo-19-nor-5alpha-androst-1-ene + formate + oxidized [NADPH--hemoprotein reductase] + H2O + 2 H(+). It participates in steroid hormone biosynthesis. Its function is as follows. A cytochrome P450 monooxygenase that catalyzes the conversion of C19 androgens, androst-4-ene-3,17-dione (androstenedione) and testosterone to the C18 estrogens, estrone and estradiol, respectively. Catalyzes three successive oxidations of C19 androgens: two conventional oxidations at C19 yielding 19-hydroxy and 19-oxo/19-aldehyde derivatives, followed by a third oxidative aromatization step that involves C1-beta hydrogen abstraction combined with cleavage of the C10-C19 bond to yield a phenolic A ring and formic acid. Alternatively, the third oxidative reaction yields a 19-norsteroid and formic acid. Converts dihydrotestosterone to delta1,10-dehydro 19-nordihydrotestosterone and may play a role in homeostasis of this potent androgen. Also displays 2-hydroxylase activity toward estrone. Mechanistically, uses molecular oxygen inserting one oxygen atom into a substrate, and reducing the second into a water molecule, with two electrons provided by NADPH via cytochrome P450 reductase (CPR; NADPH-ferrihemoprotein reductase). The polypeptide is Aromatase (CYP19A1) (Equus caballus (Horse)).